Consider the following 124-residue polypeptide: Galanin peptides (124 aa).

A signal peptide spans 1-19 (MARGSVILLAWLLLVATLS). Residues 20-30 (ATLGLGMPTKE) constitute a propeptide that is removed on maturation. Position 61 is a threonine amide (Thr-61). Phosphoserine is present on residues Ser-117 and Ser-118.

It belongs to the galanin family.

The protein resides in the secreted. Functionally, endocrine hormone of the central and peripheral nervous systems that binds and activates the G protein-coupled receptors GALR1, GALR2, and GALR3. This small neuropeptide may regulate diverse physiologic functions including contraction of smooth muscle of the gastrointestinal and genitourinary tract, growth hormone and insulin release and adrenal secretion. This Rattus norvegicus (Rat) protein is Galanin peptides (Gal).